Here is a 149-residue protein sequence, read N- to C-terminus: Large ribosomal subunit protein bL9 (149 aa).

Belongs to the bacterial ribosomal protein bL9 family.

Its function is as follows. Binds to the 23S rRNA. The polypeptide is Large ribosomal subunit protein bL9 (Xanthomonas oryzae pv. oryzae (strain MAFF 311018)).